A 182-amino-acid polypeptide reads, in one-letter code: MRCPYCGGLDTQVRDSRPTEDNTAIRRRRICPDCGGRFTTFERVQLRELMVLKRSGRRVPFDRDKLARSVDVALRKRPVDGERVERMLSGIVRQLESMGDSDITSQTIGEMVMEGLKQLDDVAYVRFASVYRNFREAKDFENALAELSQPELAQSDDVKAEGGAEGGRDKPKAAGKPPRSAE.

The tract at residues 1 to 24 (MRCPYCGGLDTQVRDSRPTEDNTA) is disordered. The segment at 3-34 (CPYCGGLDTQVRDSRPTEDNTAIRRRRICPDC) is a zinc-finger region. The segment covering 12–24 (QVRDSRPTEDNTA) has biased composition (basic and acidic residues). An ATP-cone domain is found at 49–139 (LMVLKRSGRR…VYRNFREAKD (91 aa)). The segment at 146-182 (ELSQPELAQSDDVKAEGGAEGGRDKPKAAGKPPRSAE) is disordered. The segment covering 156–172 (DDVKAEGGAEGGRDKPK) has biased composition (basic and acidic residues).

Belongs to the NrdR family. It depends on Zn(2+) as a cofactor.

In terms of biological role, negatively regulates transcription of bacterial ribonucleotide reductase nrd genes and operons by binding to NrdR-boxes. The sequence is that of Transcriptional repressor NrdR from Xanthobacter autotrophicus (strain ATCC BAA-1158 / Py2).